The primary structure comprises 111 residues: uncharacterized protein (111 aa).

A run of 2 helical transmembrane segments spans residues isoleucine 27–phenylalanine 47 and isoleucine 80–isoleucine 100.

The protein localises to the membrane. This is an uncharacterized protein from Acanthamoeba polyphaga (Amoeba).